A 495-amino-acid chain; its full sequence is uncharacterized protein (495 aa).

A signal peptide spans 1–17; that stretch reads MRTLSLLILFLSTFLFA.

This is an uncharacterized protein from Aquifex aeolicus (strain VF5).